Here is a 142-residue protein sequence, read N- to C-terminus: Mini-ribonuclease 3 (142 aa).

Asp-33 is an active-site residue.

This sequence belongs to the MrnC RNase family. As to quaternary structure, homodimer. The cofactor is Mg(2+).

Its subcellular location is the cytoplasm. Its function is as follows. Involved in correct processing of both the 5' and 3' ends of 23S rRNA precursor. Processes 30S rRNA precursor transcript even in absence of ribonuclease 3 (Rnc); Rnc processes 30S rRNA into smaller rRNA precursors. In Thermoanaerobacter sp. (strain X514), this protein is Mini-ribonuclease 3.